Consider the following 208-residue polypeptide: Ribosomal RNA small subunit methyltransferase G (208 aa).

Residues G73, L78, 124–125 (VE), and R139 each bind S-adenosyl-L-methionine.

This sequence belongs to the methyltransferase superfamily. RNA methyltransferase RsmG family.

Its subcellular location is the cytoplasm. The enzyme catalyses guanosine(527) in 16S rRNA + S-adenosyl-L-methionine = N(7)-methylguanosine(527) in 16S rRNA + S-adenosyl-L-homocysteine. Its function is as follows. Specifically methylates the N7 position of guanine in position 527 of 16S rRNA. In Aeromonas salmonicida (strain A449), this protein is Ribosomal RNA small subunit methyltransferase G.